The chain runs to 304 residues: Protein translocase subunit SecF (304 aa).

The next 6 helical transmembrane spans lie at 20–40, 143–163, 164–184, 195–215, 244–266, and 276–298; these read AKLF…LIFT, AMMA…IRFE, LIFA…TLGF, TVVA…IVVF, LSRT…IFGG, and LVIG…VYLI.

The protein belongs to the SecD/SecF family. SecF subfamily. In terms of assembly, forms a complex with SecD. Part of the essential Sec protein translocation apparatus which comprises SecA, SecYEG and auxiliary proteins SecDF. Other proteins may also be involved.

The protein localises to the cell inner membrane. Its function is as follows. Part of the Sec protein translocase complex. Interacts with the SecYEG preprotein conducting channel. SecDF uses the proton motive force (PMF) to complete protein translocation after the ATP-dependent function of SecA. This Calditerrivibrio nitroreducens (strain DSM 19672 / NBRC 101217 / Yu37-1) protein is Protein translocase subunit SecF.